Reading from the N-terminus, the 175-residue chain is Inosine/xanthosine triphosphatase (175 aa).

Substrate is bound at residue 8–13 (TTNPAK). The Mg(2+) site is built by Glu38 and Glu68. 68–69 (EA) provides a ligand contact to substrate.

Belongs to the YjjX NTPase family. In terms of assembly, homodimer. Mg(2+) is required as a cofactor. The cofactor is Mn(2+).

The enzyme catalyses XTP + H2O = XDP + phosphate + H(+). The catalysed reaction is ITP + H2O = IDP + phosphate + H(+). In terms of biological role, phosphatase that hydrolyzes non-canonical purine nucleotides such as XTP and ITP to their respective diphosphate derivatives. Probably excludes non-canonical purines from DNA/RNA precursor pool, thus preventing their incorporation into DNA/RNA and avoiding chromosomal lesions. In Escherichia coli O127:H6 (strain E2348/69 / EPEC), this protein is Inosine/xanthosine triphosphatase (yjjX).